We begin with the raw amino-acid sequence, 310 residues long: Zinc finger protein-like 1 (310 aa).

The segment at 1-43 (MGLCKCPKRKVTNLFCFEHRVNVCEHCLVANHAKCIVQSYLQW) adopts a B box-type; degenerate zinc-finger fold. At 1-266 (MGLCKCPKRK…RPLTLLQRAG (266 aa)) the chain is on the cytoplasmic side. An RING-type; degenerate zinc finger spans residues 53 to 101 (CRLCNIPLASRETTRLVCYDLFHWACLNERAAQLPRNTAPAGYQCPSCN). Positions 145–231 (PEPLNTSDFS…RTPGLHGDCD (87 aa)) are disordered. Polar residues predominate over residues 148 to 165 (LNTSDFSDWSSFNASSTP). A compositionally biased stretch (basic and acidic residues) spans 213-224 (KVYDTRDDDRTP). A helical membrane pass occupies residues 267-287 (LLLLLGLLGFLALLALMSRLG). At 288–310 (RAAADSDPNLDPLMNPHIRVGPS) the chain is on the lumenal side.

It belongs to the ZFPL1 family. Interacts with GOLGA2/GM130. Phosphorylated. As to expression, expressed strongly in the exocrine pancreas.

It is found in the golgi apparatus. It localises to the cis-Golgi network membrane. Its function is as follows. Required for cis-Golgi integrity and efficient ER to Golgi transport. Involved in the maintenance of the integrity of the cis-Golgi, possibly via its interaction with GOLGA2/GM130. The protein is Zinc finger protein-like 1 (ZFPL1) of Homo sapiens (Human).